A 117-amino-acid polypeptide reads, in one-letter code: Large ribosomal subunit protein bL20 (117 aa).

This sequence belongs to the bacterial ribosomal protein bL20 family.

Functionally, binds directly to 23S ribosomal RNA and is necessary for the in vitro assembly process of the 50S ribosomal subunit. It is not involved in the protein synthesizing functions of that subunit. The polypeptide is Large ribosomal subunit protein bL20 (Chromohalobacter salexigens (strain ATCC BAA-138 / DSM 3043 / CIP 106854 / NCIMB 13768 / 1H11)).